The following is a 124-amino-acid chain: Fluoride-specific ion channel FluC (124 aa).

The next 4 membrane-spanning stretches (helical) occupy residues 5–27, 42–62, 63–83, and 95–115; these read LFVA…LMLQ, ILGS…EVSP, EIKA…STFS, and LVKA…VVYL. Na(+)-binding residues include G74 and T77.

Belongs to the fluoride channel Fluc/FEX (TC 1.A.43) family.

It localises to the cell inner membrane. It catalyses the reaction fluoride(in) = fluoride(out). Its activity is regulated as follows. Na(+) is not transported, but it plays an essential structural role and its presence is essential for fluoride channel function. In terms of biological role, fluoride-specific ion channel. Important for reducing fluoride concentration in the cell, thus reducing its toxicity. The polypeptide is Fluoride-specific ion channel FluC (Shewanella piezotolerans (strain WP3 / JCM 13877)).